A 647-amino-acid chain; its full sequence is Threonine--tRNA ligase (647 aa).

The TGS domain maps to 1–61; sequence MINITFPDGA…TEDGSIEIVT (61 aa). Residues 242 to 540 are catalytic; that stretch reads DHRKLGKELD…LIENYKGAFP (299 aa). Zn(2+) contacts are provided by C336, H387, and H517.

Belongs to the class-II aminoacyl-tRNA synthetase family. In terms of assembly, homodimer. Requires Zn(2+) as cofactor.

Its subcellular location is the cytoplasm. It carries out the reaction tRNA(Thr) + L-threonine + ATP = L-threonyl-tRNA(Thr) + AMP + diphosphate + H(+). Its function is as follows. Catalyzes the attachment of threonine to tRNA(Thr) in a two-step reaction: L-threonine is first activated by ATP to form Thr-AMP and then transferred to the acceptor end of tRNA(Thr). Also edits incorrectly charged L-seryl-tRNA(Thr). The protein is Threonine--tRNA ligase of Streptococcus pneumoniae (strain ATCC 700669 / Spain 23F-1).